Here is a 165-residue protein sequence, read N- to C-terminus: UBA-like domain-containing protein 2-B (165 aa).

Positions 119–165 are disordered; that stretch reads QQPVWLPPASPTAHLHHHHHHPQPVWPPNSQPTGGPQKAMAAMDGQR.

It belongs to the UBALD family.

This chain is UBA-like domain-containing protein 2-B (ubald2-b), found in Xenopus laevis (African clawed frog).